We begin with the raw amino-acid sequence, 338 residues long: Inositol 2-dehydrogenase 3 (338 aa).

This sequence belongs to the Gfo/Idh/MocA family. As to quaternary structure, homotetramer.

The catalysed reaction is myo-inositol + NAD(+) = scyllo-inosose + NADH + H(+). Its function is as follows. Involved in the oxidation of myo-inositol (MI) to 2-keto-myo-inositol (2KMI or 2-inosose). This is Inositol 2-dehydrogenase 3 from Saccharopolyspora erythraea (strain ATCC 11635 / DSM 40517 / JCM 4748 / NBRC 13426 / NCIMB 8594 / NRRL 2338).